The sequence spans 348 residues: MKIAVDAMGGDFAPLEIVKGIEIARDRYDDIDFQLYGTASEVKPLVTNWERIELIPTTEVIEMGDEPVKAMRRKKDSSMVRAALAVKEGHADALFSAGNTGALLSSAIFLVGRIKGVDRPALATALPSFEGEHDQFVFMDLGANADSKPAHLYQYGILGSFYASHVLGIQSPTVRLLNNGAEEDKGDEVHKVAHQLMKNAPSFNFLGNIEARELLEGTADVVVADGFSGNAALKATEGTALMMLKQIKAAIMDSGTRGKMGGALLKPAFKSIQKKLDYNEAGGAVILGVKAPVVKTHGSAKATAVANTMGQIKTMIDQHLVSDIQNYIDTHTEELQAGKEALNAQINA.

The protein belongs to the PlsX family. Homodimer. Probably interacts with PlsY.

It is found in the cytoplasm. The catalysed reaction is a fatty acyl-[ACP] + phosphate = an acyl phosphate + holo-[ACP]. The protein operates within lipid metabolism; phospholipid metabolism. Catalyzes the reversible formation of acyl-phosphate (acyl-PO(4)) from acyl-[acyl-carrier-protein] (acyl-ACP). This enzyme utilizes acyl-ACP as fatty acyl donor, but not acyl-CoA. This chain is Phosphate acyltransferase, found in Leuconostoc citreum (strain KM20).